The sequence spans 269 residues: 4-hydroxy-tetrahydrodipicolinate reductase (269 aa).

NAD(+) is bound by residues 10-15 (GANGRM), Glu36, 99-101 (GTT), and 123-126 (AANF). His156 (proton donor/acceptor) is an active-site residue. His157 lines the (S)-2,3,4,5-tetrahydrodipicolinate pocket. Lys160 serves as the catalytic Proton donor. 166–167 (GT) serves as a coordination point for (S)-2,3,4,5-tetrahydrodipicolinate.

Belongs to the DapB family.

It is found in the cytoplasm. It carries out the reaction (S)-2,3,4,5-tetrahydrodipicolinate + NAD(+) + H2O = (2S,4S)-4-hydroxy-2,3,4,5-tetrahydrodipicolinate + NADH + H(+). It catalyses the reaction (S)-2,3,4,5-tetrahydrodipicolinate + NADP(+) + H2O = (2S,4S)-4-hydroxy-2,3,4,5-tetrahydrodipicolinate + NADPH + H(+). It functions in the pathway amino-acid biosynthesis; L-lysine biosynthesis via DAP pathway; (S)-tetrahydrodipicolinate from L-aspartate: step 4/4. In terms of biological role, catalyzes the conversion of 4-hydroxy-tetrahydrodipicolinate (HTPA) to tetrahydrodipicolinate. The sequence is that of 4-hydroxy-tetrahydrodipicolinate reductase from Neisseria meningitidis serogroup B (strain ATCC BAA-335 / MC58).